The following is a 245-amino-acid chain: Aliphatic sulfonates import ATP-binding protein SsuB 2 (245 aa).

One can recognise an ABC transporter domain in the interval 15–229 (VAVRGLSRAF…DVADPEFARI (215 aa)). Residue 47 to 54 (GASGCGKS) coordinates ATP.

It belongs to the ABC transporter superfamily. Aliphatic sulfonates importer (TC 3.A.1.17.2) family. In terms of assembly, the complex is composed of two ATP-binding proteins (SsuB), two transmembrane proteins (SsuC) and a solute-binding protein (SsuA).

It is found in the cell inner membrane. The catalysed reaction is ATP + H2O + aliphatic sulfonate-[sulfonate-binding protein]Side 1 = ADP + phosphate + aliphatic sulfonateSide 2 + [sulfonate-binding protein]Side 1.. Functionally, part of the ABC transporter complex SsuABC involved in aliphatic sulfonates import. Responsible for energy coupling to the transport system. This Paracoccus denitrificans (strain Pd 1222) protein is Aliphatic sulfonates import ATP-binding protein SsuB 2.